Consider the following 292-residue polypeptide: Nucleophosmin (292 aa).

Met-1 carries the N-acetylmethionine modification. The segment at 1–117 (MEDSMDMDMS…PVHISGQHLV (117 aa)) is necessary for interaction with APEX1. The required for interaction with SENP3 stretch occupies residues 1 to 185 (MEDSMDMDMS…DDDDFDEEET (185 aa)). The residue at position 4 (Ser-4) is a Phosphoserine; by PLK1 and PLK2. Ser-10 carries the post-translational modification Phosphoserine. Lys-27 is covalently cross-linked (Glycyl lysine isopeptide (Lys-Gly) (interchain with G-Cter in SUMO2)). Lys-32 is modified (N6-acetyllysine; alternate). Residue Lys-32 forms a Glycyl lysine isopeptide (Lys-Gly) (interchain with G-Cter in SUMO1); alternate linkage. A Glycyl lysine isopeptide (Lys-Gly) (interchain with G-Cter in SUMO2); alternate cross-link involves residue Lys-32. Phosphoserine is present on Ser-43. At Tyr-67 the chain carries Phosphotyrosine. Ser-70 carries the phosphoserine modification. Phosphothreonine occurs at positions 75 and 95. 2 positions are modified to phosphoserine: Ser-125 and Ser-139. Positions 138–248 (MSGKRSAPGG…PSSVEDIKAK (111 aa)) are disordered. A Glycyl lysine isopeptide (Lys-Gly) (interchain with G-Cter in SUMO2) cross-link involves residue Lys-141. Lys-150 carries the N6-acetyllysine; alternate modification. Lys-150 participates in a covalent cross-link: Glycyl lysine isopeptide (Lys-Gly) (interchain with G-Cter in SUMO2); alternate. A Nuclear localization signal motif is present at residues 152–157 (PQKKVK). Lys-154 carries the post-translational modification N6-acetyllysine. The segment covering 159–186 (DEDDEDDDEDDEDDEDDDDDDFDEEETE) has biased composition (acidic residues). Residues 186–214 (EEKVPVKKSVRDTPAKNAQKSNQNGKDLK) are interaction with NOP2. Residues 187 to 199 (EKVPVKKSVRDTP) show a composition bias toward basic and acidic residues. The Nuclear localization signal motif lies at 190–196 (PVKKSVR). A Phosphothreonine; by CDK1 and CDK2 modification is found at Thr-198. Residues 201–210 (KNAQKSNQNG) are compositionally biased toward polar residues. ADP-ribosylserine is present on Ser-206. At Lys-211 the chain carries N6-acetyllysine. Lys-214 participates in a covalent cross-link: Glycyl lysine isopeptide (Lys-Gly) (interchain with G-Cter in SUMO2). Thr-217 bears the Phosphothreonine; by CDK1 mark. Residues 221 to 233 (KGQESFKKQEKTP) show a composition bias toward basic and acidic residues. Ser-225 carries the post-translational modification Phosphoserine. Lys-227 is modified (N6-acetyllysine). Lys-228 is subject to N6-acetyllysine; alternate. Residue Lys-228 forms a Glycyl lysine isopeptide (Lys-Gly) (interchain with G-Cter in SUMO); alternate linkage. Thr-232 and Thr-235 each carry phosphothreonine; by CDK1. Ser-240 and Ser-241 each carry phosphoserine. The interval 241-292 (SVEDIKAKMQASIEKGGSLPKVEAKFINYVKNCFRMTDQEAIQDLWQWRKSL) is required for nucleolar localization. Residue Lys-246 forms a Glycyl lysine isopeptide (Lys-Gly) (interchain with G-Cter in SUMO1); alternate linkage. Residues Lys-246 and Lys-248 each participate in a glycyl lysine isopeptide (Lys-Gly) (interchain with G-Cter in SUMO2); alternate cross-link. An N6-acetyllysine; alternate modification is found at Lys-248. At Ser-252 the chain carries Phosphoserine. Residue Lys-255 is modified to N6-acetyllysine; alternate. Lys-255 participates in a covalent cross-link: Glycyl lysine isopeptide (Lys-Gly) (interchain with G-Cter in SUMO1); alternate. Residue Lys-255 forms a Glycyl lysine isopeptide (Lys-Gly) (interchain with G-Cter in SUMO2); alternate linkage. At Ser-258 the chain carries Phosphoserine. Glycyl lysine isopeptide (Lys-Gly) (interchain with G-Cter in SUMO2); alternate cross-links involve residues Lys-261, Lys-265, and Lys-271. A Glycyl lysine isopeptide (Lys-Gly) (interchain with G-Cter in SUMO); alternate cross-link involves residue Lys-261. N6-acetyllysine; alternate is present on residues Lys-265 and Lys-271. Lys-265 participates in a covalent cross-link: Glycyl lysine isopeptide (Lys-Gly) (interchain with G-Cter in SUMO1); alternate. Lys-265 bears the N6-succinyllysine; alternate mark. Thr-277 carries the post-translational modification Phosphothreonine. The residue at position 290 (Lys-290) is an N6-acetyllysine.

Belongs to the nucleoplasmin family. In terms of assembly, decamer formed by two pentameric rings associated in a head-to-head fashion. Disulfide-linked dimers under certain conditions. Interacts with NSUN2 and SENP3. The SWAP complex consists of NPM1, NCL, PARP1 and SWAP70. Interacts with the methylated form of RPS10. Interacts (via N-terminal domain) with APEX1; the interaction is RNA-dependent and decreases peroxide-damaged cells. Interacts with NEK2. Interacts with ROCK2 and BRCA2. Interacts with RPGR. Interacts with CENPW. Interacts with EIF2AK2/PKR. Interacts with DDX31; this interaction prevents interaction between NPM1 and HDM2. Interacts with MYC; competitive with NOP53. Interacts with NOP53; the interaction is direct and competitive with MYC. Interacts with LRRC34. Interacts with RRP1B. Interacts with NPM3. Interacts with ALKBH2. Interacts with TTF1 (via C-terminal region). Interacts with NOP2. Interacts with ARID3C (via REKLES DOMAIN); the interaction mediates ARID3C nuclear shuttling. Acetylated at C-terminal lysine residues, thereby increasing affinity to histones. Post-translationally, ADP-ribosylated. In terms of processing, phosphorylated at Ser-4 by PLK1 and PLK2. Phosphorylation at Ser-4 by PLK2 in S phase is required for centriole duplication and is sufficient to trigger centriole replication. Phosphorylation at Ser-4 by PLK1 takes place during mitosis. Phosphorylated by CDK2 at Ser-125 and Thr-198. Phosphorylation at Thr-198 may trigger initiation of centrosome duplication. Phosphorylated by CDK1 at Thr-198, Thr-217, Thr-232 and Thr-235 during cell mitosis. When these four sites are phosphorated, RNA-binding activity seem to be abolished. May be phosphorylated at Ser-70 by NEK2. The Thr-198 phosphorylated form has higher affinity for ROCK2. Sumoylated by ARF. Post-translationally, ubiquitinated. Ubiquitination leads to proteasomal degradation. Deubiquitinated by USP36. Expressed in B-cells that have been induced to switch to various Ig isotypes.

It is found in the nucleus. The protein localises to the nucleolus. The protein resides in the nucleoplasm. Its subcellular location is the cytoplasm. It localises to the cytoskeleton. It is found in the microtubule organizing center. The protein localises to the centrosome. Functionally, involved in diverse cellular processes such as ribosome biogenesis, centrosome duplication, protein chaperoning, histone assembly, cell proliferation, and regulation of tumor suppressors p53/TP53 and ARF. Binds ribosome presumably to drive ribosome nuclear export. Associated with nucleolar ribonucleoprotein structures and bind single-stranded nucleic acids. Acts as a chaperonin for the core histones H3, H2B and H4. Stimulates APEX1 endonuclease activity on apurinic/apyrimidinic (AP) double-stranded DNA but inhibits APEX1 endonuclease activity on AP single-stranded RNA. May exert a control of APEX1 endonuclease activity within nucleoli devoted to repair AP on rDNA and the removal of oxidized rRNA molecules. In concert with BRCA2, regulates centrosome duplication. Regulates centriole duplication: phosphorylation by PLK2 is able to trigger centriole replication. Negatively regulates the activation of EIF2AK2/PKR and suppresses apoptosis through inhibition of EIF2AK2/PKR autophosphorylation. Antagonizes the inhibitory effect of ATF5 on cell proliferation and relieves ATF5-induced G2/M blockade. In complex with MYC enhances the transcription of MYC target genes. May act as chaperonin or cotransporter in the nucleolar localization of transcription termination factor TTF1. The chain is Nucleophosmin (Npm1) from Mus musculus (Mouse).